The chain runs to 548 residues: Probable bifunctional tRNA threonylcarbamoyladenosine biosynthesis protein (548 aa).

Residues 1-338 (MRILGIEGTA…FRPDEVAVTW (338 aa)) are kae1. Fe cation-binding residues include histidine 122 and histidine 126. Residues 143 to 147 (NASGA), aspartate 175, glycine 188, glutamate 192, and asparagine 271 each bind L-threonylcarbamoyladenylate. Fe cation is bound at residue aspartate 299. Positions 349–548 (RMGGDEVQGA…DDIEGRGRYQ (200 aa)) constitute a Protein kinase domain. ATP contacts are provided by residues 355–362 (VQGAEATV) and lysine 371. Residues 390–404 (ERTRQEARLTSEARR) are compositionally biased toward basic and acidic residues. The interval 390-413 (ERTRQEARLTSEARRNGVPTPLVR) is disordered. Aspartate 460 functions as the Proton acceptor; for kinase activity in the catalytic mechanism.

The protein in the N-terminal section; belongs to the KAE1 / TsaD family. It in the C-terminal section; belongs to the protein kinase superfamily. Tyr protein kinase family. BUD32 subfamily. Component of the KEOPS complex that consists of Kae1, Bud32, Cgi121 and Pcc1; the whole complex dimerizes. It depends on Fe(2+) as a cofactor.

Its subcellular location is the cytoplasm. The catalysed reaction is L-seryl-[protein] + ATP = O-phospho-L-seryl-[protein] + ADP + H(+). It catalyses the reaction L-threonyl-[protein] + ATP = O-phospho-L-threonyl-[protein] + ADP + H(+). It carries out the reaction L-threonylcarbamoyladenylate + adenosine(37) in tRNA = N(6)-L-threonylcarbamoyladenosine(37) in tRNA + AMP + H(+). In terms of biological role, required for the formation of a threonylcarbamoyl group on adenosine at position 37 (t(6)A37) in tRNAs that read codons beginning with adenine. Is a component of the KEOPS complex that is probably involved in the transfer of the threonylcarbamoyl moiety of threonylcarbamoyl-AMP (TC-AMP) to the N6 group of A37. The Kae1 domain likely plays a direct catalytic role in this reaction. The Bud32 domain probably displays kinase activity that regulates Kae1 function. The protein is Probable bifunctional tRNA threonylcarbamoyladenosine biosynthesis protein of Haloarcula marismortui (strain ATCC 43049 / DSM 3752 / JCM 8966 / VKM B-1809) (Halobacterium marismortui).